The sequence spans 408 residues: MTEKVKRVVLAYSGGLDTSVILKWLQEHYGCEVVTFTADLGQGEELEPARKKAEMMGIKPEHIFMDDLREEFVRDFVFPMMRANALYEGQYLLGTSIARPLIAKRQIEIARQVGADAVAHGATGKGNDQIRFELGYYALAPDIKVIAPWREWDLNSRSKLIAYAESRQIAVPKDKRGESPFSVDSNLLHTSSEGKILEDPWQEVPDYVYSRTVNPEDAPNTPEIITIDFERGDAIAINGEALSPAELLTKLNELGRKHGIGRLDLVENRYIGMKSRGMYETPGGTILIQAHRGIEQLTLDGGAMHLKDELMPRYAELIYNGFWYSPEREMLQAAIDHSQARVSGTVRLKLYKGSVNVIGRKSPNSLYSEKVVTFEDDAGAYNQQDAAGFIKLNALRLRLLGERNAKGL.

ATP-binding positions include 11 to 19 (AYSGGLDTS) and A38. L-citrulline contacts are provided by Y91 and S96. G121 serves as a coordination point for ATP. Residues T123, N127, and D128 each coordinate L-aspartate. N127 is a binding site for L-citrulline. Residues R131, S182, S191, E267, and Y279 each coordinate L-citrulline.

Belongs to the argininosuccinate synthase family. Type 1 subfamily. Homotetramer.

The protein resides in the cytoplasm. The enzyme catalyses L-citrulline + L-aspartate + ATP = 2-(N(omega)-L-arginino)succinate + AMP + diphosphate + H(+). It functions in the pathway amino-acid biosynthesis; L-arginine biosynthesis; L-arginine from L-ornithine and carbamoyl phosphate: step 2/3. The chain is Argininosuccinate synthase from Zymomonas mobilis subsp. mobilis (strain ATCC 31821 / ZM4 / CP4).